The following is a 529-amino-acid chain: MYRLLERTLDRFTGLVEYQPTYPFAAPTWVYLVGAILIQQLATRWYRYYKSWVNVPVVGGHGIIGSWIAAFRWTARARSLVNEGYQKYGDFAFQVSTPTRWEVFICNDEMVREYRNFTDERFSANALFEAKYTVPGAAEGVHKVPVPIVAKALTWQRTRAATKTDPYFEEFVKELQHAFDAETKFENEDWNDLCCFATGTRIVAHLTAKSLVGYPLSRDTELIDLFAEYGNAVPTSGFFIAMFPQILKPFAAKFCSAPKISARLDRIVMDELRKREANPRSEPQVQDITDWITFWSRTYPGTYTDQDIARSVVSAVFGAIHTTTQVLVHCLTDLAIRPEYIHPLREEVETILNRDDQQWTKEGLESMEKLDSFVKECQRFNPLDAGSLARRATKDFTFSKGLHIPEGTFVFTPNSPVLFDEKHYPDAQQFDGYRFYRLGRVTGRPLEYKFIAANLKYLQFGDGRHICPGRFMAADEIRLLLAHILVNYDIRPKDDGERPPNWTFKKILFPDMKGMVQLKRRSINISQPN.

2 helical membrane-spanning segments follow: residues 22-42 (YPFA…QQLA) and 51-71 (SWVN…IAAF). Cys467 provides a ligand contact to heme.

This sequence belongs to the cytochrome P450 family. Heme is required as a cofactor.

Its subcellular location is the membrane. The protein operates within secondary metabolite biosynthesis. In terms of biological role, cytochrome P450 monooxygenase; part of the ATM2 gene cluster that mediates the biosynthesis of aflatrem, a tremorgenic mycotoxin with acute neurotoxic effects. Synthesis of geranylgeranyl diphosphate (GGPP) by AtmG (a GGPP synthase) precedes condensation of GGPP with indole 3-glycerol phosphate, followed by epoxidation and cyclization by AtmM (a FAD-dependent monooxygenase) and AtmC (a prenyltransferase) to produce paspaline. AtmB is also essential for paspaline production, but its exact role has not been identified yet. AtmP, a cytochrome P450 monooxygenase, subsequently converts paspaline to 13-desoxypaxilline via PC-M6 by removal of the C-30 methyl group and oxidation at C-10. AtmQ, a cytochrome P450 monooxygenase, then catalyzes the oxidation of 13-desoxypaxilline, first at C-7 to produce paspalicine and then at C-13 to form paspalinine. Finally, AtmD prenylates paspalinine to form aflatrem. The protein is Cytochrome P450 monooxygenase atmQ of Aspergillus flavus.